A 409-amino-acid chain; its full sequence is Arginine deiminase (409 aa).

Cys-399 (amidino-cysteine intermediate) is an active-site residue.

This sequence belongs to the arginine deiminase family.

It is found in the cytoplasm. The catalysed reaction is L-arginine + H2O = L-citrulline + NH4(+). It functions in the pathway amino-acid degradation; L-arginine degradation via ADI pathway; carbamoyl phosphate from L-arginine: step 1/2. The polypeptide is Arginine deiminase (Borreliella afzelii (strain PKo) (Borrelia afzelii)).